The chain runs to 66 residues: Large ribosomal subunit protein bL33c (66 aa).

This sequence belongs to the bacterial ribosomal protein bL33 family.

Its subcellular location is the plastid. The protein localises to the chloroplast. The chain is Large ribosomal subunit protein bL33c from Platanus occidentalis (Sycamore).